The primary structure comprises 441 residues: Actin-related protein 4 (441 aa).

The disordered stretch occupies residues 48-73 (VDVDSTKTNSNSEDSKTESEKEKSKR). Positions 60-70 (EDSKTESEKEK) are enriched in basic and acidic residues.

It belongs to the actin family. ARP4 subfamily. Component of the SWR1 chromatin-remodeling complex and of the NuA4 histone acetyltransferase complex. Interacts with the SWI/SNF complex. Interacts with EAF1A and EAF1B. Mostly expressed in flowers, and, to a lower extent, in roots, seedlings, leaves and siliques (at protein level).

Its subcellular location is the nucleus. It localises to the cytoplasm. Involved in several developmental processes including organization of plant organs, flowering time, anther development, flower senescence and fertility, probably by regulating the chromatin structure. This Arabidopsis thaliana (Mouse-ear cress) protein is Actin-related protein 4.